The primary structure comprises 157 residues: 2-C-methyl-D-erythritol 2,4-cyclodiphosphate synthase (157 aa).

A divalent metal cation is bound by residues Asp-8, His-10, and His-42. 8 to 10 provides a ligand contact to 4-CDP-2-C-methyl-D-erythritol 2-phosphate; sequence DVH. Residues 56-58, 132-135, Phe-139, and Arg-142 each bind 4-CDP-2-C-methyl-D-erythritol 2-phosphate; these read DIG and STSE.

It belongs to the IspF family. As to quaternary structure, homotrimer. Requires a divalent metal cation as cofactor.

It catalyses the reaction 4-CDP-2-C-methyl-D-erythritol 2-phosphate = 2-C-methyl-D-erythritol 2,4-cyclic diphosphate + CMP. Its pathway is isoprenoid biosynthesis; isopentenyl diphosphate biosynthesis via DXP pathway; isopentenyl diphosphate from 1-deoxy-D-xylulose 5-phosphate: step 4/6. In terms of biological role, involved in the biosynthesis of isopentenyl diphosphate (IPP) and dimethylallyl diphosphate (DMAPP), two major building blocks of isoprenoid compounds. Catalyzes the conversion of 4-diphosphocytidyl-2-C-methyl-D-erythritol 2-phosphate (CDP-ME2P) to 2-C-methyl-D-erythritol 2,4-cyclodiphosphate (ME-CPP) with a corresponding release of cytidine 5-monophosphate (CMP). In Dehalococcoides mccartyi (strain ATCC BAA-2266 / KCTC 15142 / 195) (Dehalococcoides ethenogenes (strain 195)), this protein is 2-C-methyl-D-erythritol 2,4-cyclodiphosphate synthase.